Here is a 474-residue protein sequence, read N- to C-terminus: MTVPSKTIAPKTLYQKVWDAHIVATPEGEAPIIYVDRHLVHEVTSPQAFSGLKVAGRQLRAPEKTFATMDHNTSTRSASLDALSPMARIQVETLAQNCKDFGVLLYDIHHPNQGIVHVMGPELGITLPGTVIVCGDSHTATHGAFGALAFGIGTSEVEHVLATQTLRQLKAKTMKIEVRGQVTDGVTAKDIVLAIIGKIGMDGGTGYVVEFCGEAIEALSMEGRMTVCNMAIEMGAKAGMVAPDQTTFDYLEGREFAPKGEDWAQAVAEWKTLKTDVGAEFDATVVLDAADIAPQLTWGTNPGQVVAIDAPVPNPADEVNPTIRSSMEKALDYIGLTAGTPMTEVAINKVFIGSCTNSRIEDLRSAAKHAKGRKVAAGVTAIVVPGSGQVKAQAEAEGLDKIFIEAGFEWRLPGCSMCLAMNDDRLEAGDRCASTSNRNFEGRQGRGSRTHLVSPAMAAAAAIAGHFVDIRKPY.

Positions 355, 415, and 418 each coordinate [4Fe-4S] cluster.

This sequence belongs to the aconitase/IPM isomerase family. LeuC type 1 subfamily. Heterodimer of LeuC and LeuD. It depends on [4Fe-4S] cluster as a cofactor.

The catalysed reaction is (2R,3S)-3-isopropylmalate = (2S)-2-isopropylmalate. The protein operates within amino-acid biosynthesis; L-leucine biosynthesis; L-leucine from 3-methyl-2-oxobutanoate: step 2/4. Its function is as follows. Catalyzes the isomerization between 2-isopropylmalate and 3-isopropylmalate, via the formation of 2-isopropylmaleate. In Shewanella oneidensis (strain ATCC 700550 / JCM 31522 / CIP 106686 / LMG 19005 / NCIMB 14063 / MR-1), this protein is 3-isopropylmalate dehydratase large subunit.